The primary structure comprises 469 residues: Argininosuccinate lyase (469 aa).

Belongs to the lyase 1 family. Argininosuccinate lyase subfamily.

The protein resides in the cytoplasm. It catalyses the reaction 2-(N(omega)-L-arginino)succinate = fumarate + L-arginine. Its pathway is amino-acid biosynthesis; L-arginine biosynthesis; L-arginine from L-ornithine and carbamoyl phosphate: step 3/3. The chain is Argininosuccinate lyase from Burkholderia multivorans (strain ATCC 17616 / 249).